A 338-amino-acid polypeptide reads, in one-letter code: Methionine synthase (338 aa).

Zn(2+) contacts are provided by His-210, Cys-212, Glu-234, and Cys-294.

The protein belongs to the archaeal MetE family. It depends on Zn(2+) as a cofactor.

The protein operates within amino-acid biosynthesis; L-methionine biosynthesis via de novo pathway. Its function is as follows. Catalyzes the transfer of a methyl group to L-homocysteine resulting in methionine formation. The physiological methyl donor is unknown. This chain is Methionine synthase, found in Pyrococcus horikoshii (strain ATCC 700860 / DSM 12428 / JCM 9974 / NBRC 100139 / OT-3).